Consider the following 158-residue polypeptide: Putative pre-16S rRNA nuclease (158 aa).

The protein belongs to the YqgF nuclease family.

The protein localises to the cytoplasm. Its function is as follows. Could be a nuclease involved in processing of the 5'-end of pre-16S rRNA. This Acidiphilium cryptum (strain JF-5) protein is Putative pre-16S rRNA nuclease.